A 95-amino-acid chain; its full sequence is Large ribosomal subunit protein uL23 (95 aa).

It belongs to the universal ribosomal protein uL23 family. As to quaternary structure, part of the 50S ribosomal subunit. Contacts protein L29, and trigger factor when it is bound to the ribosome.

Its function is as follows. One of the early assembly proteins it binds 23S rRNA. One of the proteins that surrounds the polypeptide exit tunnel on the outside of the ribosome. Forms the main docking site for trigger factor binding to the ribosome. The chain is Large ribosomal subunit protein uL23 from Syntrophotalea carbinolica (strain DSM 2380 / NBRC 103641 / GraBd1) (Pelobacter carbinolicus).